Here is a 276-residue protein sequence, read N- to C-terminus: Small ribosomal subunit protein uS2 (276 aa).

The disordered stretch occupies residues Lys-226–Glu-276. A compositionally biased stretch (low complexity) spans Ala-251 to Glu-276.

It belongs to the universal ribosomal protein uS2 family.

In Corynebacterium efficiens (strain DSM 44549 / YS-314 / AJ 12310 / JCM 11189 / NBRC 100395), this protein is Small ribosomal subunit protein uS2.